Consider the following 280-residue polypeptide: Nucleotide-binding protein CV_3336 (280 aa).

Residue 8 to 15 participates in ATP binding; it reads GLSGSGKS. Residue 57-60 coordinates GTP; that stretch reads DTRS.

This sequence belongs to the RapZ-like family.

Displays ATPase and GTPase activities. The sequence is that of Nucleotide-binding protein CV_3336 from Chromobacterium violaceum (strain ATCC 12472 / DSM 30191 / JCM 1249 / CCUG 213 / NBRC 12614 / NCIMB 9131 / NCTC 9757 / MK).